A 187-amino-acid chain; its full sequence is Adenine phosphoribosyltransferase 1 (187 aa).

Serine 68 bears the Phosphoserine mark. Residue 133–137 (ATGGS) coordinates AMP.

Belongs to the purine/pyrimidine phosphoribosyltransferase family. Homodimer. Mg(2+) is required as a cofactor.

It is found in the cytoplasm. It localises to the nucleus. The catalysed reaction is AMP + diphosphate = 5-phospho-alpha-D-ribose 1-diphosphate + adenine. Its pathway is purine metabolism; AMP biosynthesis via salvage pathway; AMP from adenine: step 1/1. Functionally, catalyzes a salvage reaction resulting in the formation of AMP, that is energically less costly than de novo synthesis. This is Adenine phosphoribosyltransferase 1 from Saccharomyces cerevisiae (strain ATCC 204508 / S288c) (Baker's yeast).